The chain runs to 387 residues: Protein RecA (387 aa).

ATP is bound at residue 80–87 (GPESSGKT). The tract at residues 348–387 (LDDSEVAETEEETTASKTKAKAKKEEKXVETEEIELELQD) is disordered. Acidic residues-rich tracts occupy residues 349 to 360 (DDSEVAETEEET) and 378 to 387 (TEEIELELQD).

Belongs to the RecA family.

The protein localises to the cytoplasm. Functionally, can catalyze the hydrolysis of ATP in the presence of single-stranded DNA, the ATP-dependent uptake of single-stranded DNA by duplex DNA, and the ATP-dependent hybridization of homologous single-stranded DNAs. It interacts with LexA causing its activation and leading to its autocatalytic cleavage. This is Protein RecA from Lactococcus lactis subsp. cremoris (Streptococcus cremoris).